Reading from the N-terminus, the 192-residue chain is Leucine-rich repeat-containing protein 51 (192 aa).

LRR repeat units follow at residues 49–71, 80–101, and 103–124; these read SLTQ…NQVA, NLAW…LTTF, and NLSV…NKLA. Positions 137 to 175 constitute an LRRCT domain; it reads NPMEEEKGYRQYVLCTLPHITTFDFSGVTKADRTTAEVW.

It localises to the cytoplasm. The chain is Leucine-rich repeat-containing protein 51 from Macaca mulatta (Rhesus macaque).